Consider the following 610-residue polypeptide: Elongation factor 4 (610 aa).

A tr-type G domain is found at 11 to 193 (ENIRNFSIIA…QIVEKVPAPS (183 aa)). GTP is bound by residues 23–28 (DHGKST) and 140–143 (NKID).

Belongs to the TRAFAC class translation factor GTPase superfamily. Classic translation factor GTPase family. LepA subfamily.

It is found in the cell membrane. The enzyme catalyses GTP + H2O = GDP + phosphate + H(+). Its function is as follows. Required for accurate and efficient protein synthesis under certain stress conditions. May act as a fidelity factor of the translation reaction, by catalyzing a one-codon backward translocation of tRNAs on improperly translocated ribosomes. Back-translocation proceeds from a post-translocation (POST) complex to a pre-translocation (PRE) complex, thus giving elongation factor G a second chance to translocate the tRNAs correctly. Binds to ribosomes in a GTP-dependent manner. The protein is Elongation factor 4 of Streptococcus equi subsp. equi (strain 4047).